Reading from the N-terminus, the 471-residue chain is Cysteine--tRNA ligase (471 aa).

Cys29 is a Zn(2+) binding site. Positions 31-41 (PTVYNYIHIGN) match the 'HIGH' region motif. Positions 209, 234, and 238 each coordinate Zn(2+). Residues 266–270 (KMSKS) carry the 'KMSKS' region motif. Lys269 provides a ligand contact to ATP.

The protein belongs to the class-I aminoacyl-tRNA synthetase family. In terms of assembly, monomer. Zn(2+) is required as a cofactor.

It is found in the cytoplasm. It catalyses the reaction tRNA(Cys) + L-cysteine + ATP = L-cysteinyl-tRNA(Cys) + AMP + diphosphate. This Listeria innocua serovar 6a (strain ATCC BAA-680 / CLIP 11262) protein is Cysteine--tRNA ligase.